Here is a 121-residue protein sequence, read N- to C-terminus: Apoptin (121 aa).

Disordered stretches follow at residues 1–28 and 57–95; these read MNAHQEDTPPGPSTVFRPPTSSRPLETP and LRSATADNSENTGFKNVPDLRTDQPKPPSKKRSCDPSEY. Over residues 58-70 the composition is skewed to polar residues; sequence RSATADNSENTGF.

It belongs to the gyrovirus apoptin family.

The protein localises to the host nucleus. Its function is as follows. May act as transcriptional regulator. Induces apoptosis in infected cells. Element of infectious replication cycle. The protein is Apoptin (VP3) of Gallus gallus (Chicken).